The chain runs to 148 residues: Aspartate carbamoyltransferase regulatory chain (148 aa).

Residues C106, C111, C134, and C137 each contribute to the Zn(2+) site.

The protein belongs to the PyrI family. In terms of assembly, contains catalytic and regulatory chains. The cofactor is Zn(2+).

Involved in allosteric regulation of aspartate carbamoyltransferase. This Methanococcus maripaludis (strain C6 / ATCC BAA-1332) protein is Aspartate carbamoyltransferase regulatory chain.